The primary structure comprises 177 residues: MILSGKTISEKLTEKELEITPLTEEQIQPASVDLRLGPHFVTIDDSKEAVISFERPIRYREWTTSDETIVLPPHTFLLATTMETVKLPNHLTAFVEGRSSVGRLGLFIQNAGWVDPGFNGQITLELFNANRLPIELPIGRRICQLVFAEVTGEVAPYQGKYLFQKGATMSEIYKDAF.

Residues arginine 98 to arginine 103, asparagine 110, aspartate 115 to phenylalanine 118, threonine 123 to glutamate 125, glutamine 144, tyrosine 157 to lysine 160, and glutamine 164 each bind dCTP. The Proton donor/acceptor role is filled by glutamate 125.

Belongs to the dCTP deaminase family. In terms of assembly, homotrimer. It depends on Mg(2+) as a cofactor.

The enzyme catalyses dCTP + 2 H2O = dUMP + NH4(+) + diphosphate. It functions in the pathway pyrimidine metabolism; dUMP biosynthesis; dUMP from dCTP: step 1/1. With respect to regulation, inhibited by dTTP. Functionally, bifunctional enzyme that catalyzes both the deamination of dCTP to dUTP and the hydrolysis of dUTP to dUMP without releasing the toxic dUTP intermediate. The polypeptide is dCTP deaminase, dUMP-forming (Halalkalibacterium halodurans (strain ATCC BAA-125 / DSM 18197 / FERM 7344 / JCM 9153 / C-125) (Bacillus halodurans)).